Here is a 636-residue protein sequence, read N- to C-terminus: Chaperone protein DnaK (636 aa).

The residue at position 198 (threonine 198) is a Phosphothreonine; by autocatalysis. The disordered stretch occupies residues 600–636 (IAQQQAQAQQGSAEAGAQSQEDDVVDAEFEEVKDDKK). Residues 601–618 (AQQQAQAQQGSAEAGAQS) are compositionally biased toward low complexity. Residues 619 to 636 (QEDDVVDAEFEEVKDDKK) show a composition bias toward acidic residues.

Belongs to the heat shock protein 70 family.

Its function is as follows. Acts as a chaperone. This Vibrio vulnificus (strain CMCP6) protein is Chaperone protein DnaK.